We begin with the raw amino-acid sequence, 936 residues long: Protocadherin alpha-5 (936 aa).

The first 28 residues, Met1 to Gly28, serve as a signal peptide directing secretion. Over Gln29–Asn696 the chain is Extracellular. 6 consecutive Cadherin domains span residues Ser33–Phe132, Ala156–Phe241, Asp242–Met349, Ala350–Phe454, Ala455–Leu564, and Val580–Ala677. Asn264, Asn448, and Asn547 each carry an N-linked (GlcNAc...) asparagine glycan. A helical membrane pass occupies residues Val697–Tyr717. The Cytoplasmic portion of the chain corresponds to Thr718–Gln936. Disordered stretches follow at residues Ser759–Arg793, Arg815–Ile875, and Gln887–Gln936. PXXP repeat units follow at residues Pro773–Pro776, Pro785–Pro788, Pro818–Pro821, Lys873–Ile876, and Pro877–Ala890. The tract at residues Pro773–Ala890 is 5 X 4 AA repeats of P-X-X-P. Residues Ser774 to Arg786 are compositionally biased toward polar residues. A compositionally biased stretch (basic and acidic residues) spans Asp895–Lys909.

The protein resides in the cell membrane. In terms of biological role, potential calcium-dependent cell-adhesion protein. May be involved in the establishment and maintenance of specific neuronal connections in the brain. This chain is Protocadherin alpha-5 (PCDHA5), found in Pan troglodytes (Chimpanzee).